Consider the following 314-residue polypeptide: Thymidylate synthase (314 aa).

Residues R32 and 176–177 contribute to the dUMP site; that span reads RR. C196 serves as the catalytic Nucleophile. Residues 216 to 219, N227, and 257 to 259 each bind dUMP; these read RSCD and HLY. D219 provides a ligand contact to (6R)-5,10-methylene-5,6,7,8-tetrahydrofolate. A313 provides a ligand contact to (6R)-5,10-methylene-5,6,7,8-tetrahydrofolate.

This sequence belongs to the thymidylate synthase family. Bacterial-type ThyA subfamily. As to quaternary structure, homodimer.

The protein resides in the cytoplasm. The catalysed reaction is dUMP + (6R)-5,10-methylene-5,6,7,8-tetrahydrofolate = 7,8-dihydrofolate + dTMP. It functions in the pathway pyrimidine metabolism; dTTP biosynthesis. Catalyzes the reductive methylation of 2'-deoxyuridine-5'-monophosphate (dUMP) to 2'-deoxythymidine-5'-monophosphate (dTMP) while utilizing 5,10-methylenetetrahydrofolate (mTHF) as the methyl donor and reductant in the reaction, yielding dihydrofolate (DHF) as a by-product. This enzymatic reaction provides an intracellular de novo source of dTMP, an essential precursor for DNA biosynthesis. This chain is Thymidylate synthase, found in Novosphingobium aromaticivorans (strain ATCC 700278 / DSM 12444 / CCUG 56034 / CIP 105152 / NBRC 16084 / F199).